The following is a 352-amino-acid chain: Long-chain-alcohol O-fatty-acyltransferase (352 aa).

The next 8 helical transmembrane spans lie at 13–33 (VWIS…VAPH), 34–54 (GGAL…FLPL), 67–87 (LYLV…LGPL), 128–148 (KVVL…IYEF), 155–175 (FVIS…TLAA), 239–259 (VAGA…VFFF), 267–287 (SWEV…EMVV), and 303–323 (GALT…PQLV).

The protein belongs to the wax synthase family.

The protein localises to the microsome membrane. The enzyme catalyses a long chain fatty alcohol + a fatty acyl-CoA = a wax ester + CoA. In terms of biological role, catalyzes the final step in the synthesis of long-chain linear esters (waxes). Has activity with both saturated and monounsaturated acyl-CoA ranging from 14 to 24 carbons in length, but C20:1 acyl-CoA is the preferred substrate. This Simmondsia chinensis (Jojoba) protein is Long-chain-alcohol O-fatty-acyltransferase.